A 140-amino-acid polypeptide reads, in one-letter code: L-fucose mutarotase (140 aa).

His-22 serves as the catalytic Proton donor. Substrate contacts are provided by residues Asp-30, Arg-107, and 129 to 131; that span reads YGN.

It belongs to the RbsD / FucU family. FucU mutarotase subfamily. As to quaternary structure, homodecamer.

The protein localises to the cytoplasm. The catalysed reaction is alpha-L-fucose = beta-L-fucose. It functions in the pathway carbohydrate metabolism; L-fucose metabolism. In terms of biological role, involved in the anomeric conversion of L-fucose. This is L-fucose mutarotase from Salmonella typhimurium (strain LT2 / SGSC1412 / ATCC 700720).